A 155-amino-acid chain; its full sequence is Endoribonuclease YbeY (155 aa).

Zn(2+) contacts are provided by H114, H118, and H124.

The protein belongs to the endoribonuclease YbeY family. It depends on Zn(2+) as a cofactor.

It is found in the cytoplasm. In terms of biological role, single strand-specific metallo-endoribonuclease involved in late-stage 70S ribosome quality control and in maturation of the 3' terminus of the 16S rRNA. The polypeptide is Endoribonuclease YbeY (Photorhabdus laumondii subsp. laumondii (strain DSM 15139 / CIP 105565 / TT01) (Photorhabdus luminescens subsp. laumondii)).